Here is a 305-residue protein sequence, read N- to C-terminus: Flagellin FlaB2 (305 aa).

Positions 1-18 (MGLQKIVKKYNKKMKRKG) are cleaved as a propeptide — propeptide.

This sequence belongs to the archaeal flagellin family. Glycosylated.

The protein localises to the archaeal flagellum. Flagellin is the subunit protein which polymerizes to form the filaments of archaeal flagella. The polypeptide is Flagellin FlaB2 (Saccharolobus shibatae (strain ATCC 51178 / DSM 5389 / JCM 8931 / NBRC 15437 / B12) (Sulfolobus shibatae)).